A 183-amino-acid polypeptide reads, in one-letter code: ATP synthase subunit b, chloroplastic (183 aa).

A helical membrane pass occupies residues 25 to 45 (DILATNLINLTVVVGVLIFFG).

Belongs to the ATPase B chain family. As to quaternary structure, F-type ATPases have 2 components, F(1) - the catalytic core - and F(0) - the membrane proton channel. F(1) has five subunits: alpha(3), beta(3), gamma(1), delta(1), epsilon(1). F(0) has four main subunits: a(1), b(1), b'(1) and c(10-14). The alpha and beta chains form an alternating ring which encloses part of the gamma chain. F(1) is attached to F(0) by a central stalk formed by the gamma and epsilon chains, while a peripheral stalk is formed by the delta, b and b' chains.

It localises to the plastid. It is found in the chloroplast thylakoid membrane. F(1)F(0) ATP synthase produces ATP from ADP in the presence of a proton or sodium gradient. F-type ATPases consist of two structural domains, F(1) containing the extramembraneous catalytic core and F(0) containing the membrane proton channel, linked together by a central stalk and a peripheral stalk. During catalysis, ATP synthesis in the catalytic domain of F(1) is coupled via a rotary mechanism of the central stalk subunits to proton translocation. Its function is as follows. Component of the F(0) channel, it forms part of the peripheral stalk, linking F(1) to F(0). This chain is ATP synthase subunit b, chloroplastic, found in Saccharum hybrid (Sugarcane).